Here is a 318-residue protein sequence, read N- to C-terminus: Porphobilinogen deaminase (318 aa).

Position 241 is an S-(dipyrrolylmethanemethyl)cysteine (Cys241).

This sequence belongs to the HMBS family. As to quaternary structure, monomer. The cofactor is dipyrromethane.

The catalysed reaction is 4 porphobilinogen + H2O = hydroxymethylbilane + 4 NH4(+). It functions in the pathway porphyrin-containing compound metabolism; protoporphyrin-IX biosynthesis; coproporphyrinogen-III from 5-aminolevulinate: step 2/4. In terms of biological role, tetrapolymerization of the monopyrrole PBG into the hydroxymethylbilane pre-uroporphyrinogen in several discrete steps. In Geotalea daltonii (strain DSM 22248 / JCM 15807 / FRC-32) (Geobacter daltonii), this protein is Porphobilinogen deaminase.